The following is a 140-amino-acid chain: 3-hydroxyacyl-[acyl-carrier-protein] dehydratase FabZ (140 aa).

The active site involves His-48.

It belongs to the thioester dehydratase family. FabZ subfamily.

It is found in the cytoplasm. It catalyses the reaction a (3R)-hydroxyacyl-[ACP] = a (2E)-enoyl-[ACP] + H2O. Its function is as follows. Involved in unsaturated fatty acids biosynthesis. Catalyzes the dehydration of short chain beta-hydroxyacyl-ACPs and long chain saturated and unsaturated beta-hydroxyacyl-ACPs. This chain is 3-hydroxyacyl-[acyl-carrier-protein] dehydratase FabZ, found in Halalkalibacterium halodurans (strain ATCC BAA-125 / DSM 18197 / FERM 7344 / JCM 9153 / C-125) (Bacillus halodurans).